Here is a 664-residue protein sequence, read N- to C-terminus: Serine/threonine-protein kinase PknD (664 aa).

At 1-381 the chain is on the cytoplasmic side; the sequence is MSDAVPQVGS…PAGNKRKVWA (381 aa). In terms of domain architecture, Protein kinase spans 15–276; sequence YQLLRLLGRG…DLAIAAHDAL (262 aa). Residues 21–29 and lysine 44 contribute to the ATP site; that span reads LGRGGMGEV. The residue at position 135 (threonine 135) is a Phosphothreonine; by autocatalysis. Aspartate 138 acts as the Proton acceptor in catalysis. Threonine 169, threonine 171, threonine 173, and threonine 209 each carry phosphothreonine; by autocatalysis. Residues 303–333 are disordered; it reads TGLSQSESGIAGAGTGPPTPGAARWSPGDSA. A helical membrane pass occupies residues 382-402; sequence VVGAAAIVLVAIVAAAGYLVL. The Extracellular segment spans residues 403–664; that stretch reads RPSWSPTQAS…GNDRVVKLTS (262 aa). NHL repeat units follow at residues 414–456, 457–497, 498–539, 540–581, 582–623, and 624–664; these read QTVL…LATG, STGT…LAAG, SNNQ…LAAG, SKTQ…LEAE, SNNQ…LLAG, and STTS…KLTS.

Belongs to the protein kinase superfamily. Ser/Thr protein kinase family. Homodimer. The extracellular domain interacts with host laminin. Post-translationally, autophosphorylated. Dephosphorylated by PstP.

It localises to the cell membrane. It catalyses the reaction L-seryl-[protein] + ATP = O-phospho-L-seryl-[protein] + ADP + H(+). The catalysed reaction is L-threonyl-[protein] + ATP = O-phospho-L-threonyl-[protein] + ADP + H(+). Dimerization activates the kinase domain of unphosphorylated PknD via an allosteric mechanism, triggering autophosphorylation and phosphorylation of target proteins. Phosphorylated PknD is fully active even in the absence of dimerization. Its function is as follows. Part of a signaling pathway that enables adaptation to osmotic stress through cell wall remodeling and virulence factor production. Functionally, key microbial factor required for central nervous system tuberculosis. Required for invasion of host brain endothelia, but not macrophages, lung epithelia or other endothelia. The protein is Serine/threonine-protein kinase PknD (pknD) of Mycobacterium tuberculosis (strain CDC 1551 / Oshkosh).